The chain runs to 451 residues: Tubulin alpha-3 chain (451 aa).

Gln11 provides a ligand contact to GTP. Lys40 is modified (N6-acetyllysine). GTP is bound by residues Glu71, Gly144, Thr145, Thr179, Asn206, and Asn228. Glu71 contributes to the Mg(2+) binding site. Residue Glu254 is part of the active site.

It belongs to the tubulin family. Dimer of alpha and beta chains. A typical microtubule is a hollow water-filled tube with an outer diameter of 25 nm and an inner diameter of 15 nM. Alpha-beta heterodimers associate head-to-tail to form protofilaments running lengthwise along the microtubule wall with the beta-tubulin subunit facing the microtubule plus end conferring a structural polarity. Microtubules usually have 13 protofilaments but different protofilament numbers can be found in some organisms and specialized cells. Requires Mg(2+) as cofactor. Undergoes a tyrosination/detyrosination cycle, the cyclic removal and re-addition of a C-terminal tyrosine residue by the enzymes tubulin tyrosine carboxypeptidase (TTCP) and tubulin tyrosine ligase (TTL), respectively. Post-translationally, acetylation of alpha chains at Lys-40 stabilizes microtubules and affects affinity and processivity of microtubule motors. This modification has a role in multiple cellular functions, ranging from cell motility, cell cycle progression or cell differentiation to intracellular trafficking and signaling.

It localises to the cytoplasm. The protein localises to the cytoskeleton. The catalysed reaction is GTP + H2O = GDP + phosphate + H(+). Tubulin is the major constituent of microtubules, a cylinder consisting of laterally associated linear protofilaments composed of alpha- and beta-tubulin heterodimers. Microtubules grow by the addition of GTP-tubulin dimers to the microtubule end, where a stabilizing cap forms. Below the cap, tubulin dimers are in GDP-bound state, owing to GTPase activity of alpha-tubulin. The chain is Tubulin alpha-3 chain (TUBA3) from Hordeum vulgare (Barley).